The following is a 362-amino-acid chain: Phosphoserine aminotransferase (362 aa).

2 residues coordinate L-glutamate: serine 9 and arginine 42. Pyridoxal 5'-phosphate-binding positions include 76–77 (GR), tryptophan 102, threonine 153, aspartate 174, and glutamine 197. Position 198 is an N6-(pyridoxal phosphate)lysine (lysine 198). Residue 239-240 (NT) coordinates pyridoxal 5'-phosphate.

Belongs to the class-V pyridoxal-phosphate-dependent aminotransferase family. SerC subfamily. In terms of assembly, homodimer. Requires pyridoxal 5'-phosphate as cofactor.

It is found in the cytoplasm. It carries out the reaction O-phospho-L-serine + 2-oxoglutarate = 3-phosphooxypyruvate + L-glutamate. The catalysed reaction is 4-(phosphooxy)-L-threonine + 2-oxoglutarate = (R)-3-hydroxy-2-oxo-4-phosphooxybutanoate + L-glutamate. Its pathway is amino-acid biosynthesis; L-serine biosynthesis; L-serine from 3-phospho-D-glycerate: step 2/3. It participates in cofactor biosynthesis; pyridoxine 5'-phosphate biosynthesis; pyridoxine 5'-phosphate from D-erythrose 4-phosphate: step 3/5. Functionally, catalyzes the reversible conversion of 3-phosphohydroxypyruvate to phosphoserine and of 3-hydroxy-2-oxo-4-phosphonooxybutanoate to phosphohydroxythreonine. In Escherichia coli O139:H28 (strain E24377A / ETEC), this protein is Phosphoserine aminotransferase.